The primary structure comprises 1024 residues: Beta-galactosidase 2 (1024 aa).

2 residues coordinate substrate: asparagine 103 and aspartate 202. Position 202 (aspartate 202) interacts with Na(+). Mg(2+) contacts are provided by glutamate 417, histidine 419, and glutamate 462. Residues glutamate 462 and 538–541 (EYAH) each bind substrate. Catalysis depends on glutamate 462, which acts as the Proton donor. The active-site Nucleophile is glutamate 538. Residue asparagine 598 coordinates Mg(2+). Positions 602 and 605 each coordinate Na(+). Residues asparagine 605 and tryptophan 1000 each coordinate substrate.

The protein belongs to the glycosyl hydrolase 2 family. In terms of assembly, homotetramer. It depends on Mg(2+) as a cofactor. The cofactor is Na(+).

It catalyses the reaction Hydrolysis of terminal non-reducing beta-D-galactose residues in beta-D-galactosides.. This is Beta-galactosidase 2 from Klebsiella pneumoniae subsp. pneumoniae (strain ATCC 700721 / MGH 78578).